A 92-amino-acid chain; its full sequence is UPF0237 protein MA_3235 (92 aa).

In terms of domain architecture, ACT spans 7–81 (IITVIGSDRV…KSLGVEVKVQ (75 aa)).

It belongs to the UPF0237 family.

This chain is UPF0237 protein MA_3235, found in Methanosarcina acetivorans (strain ATCC 35395 / DSM 2834 / JCM 12185 / C2A).